The primary structure comprises 133 residues: ATP synthase epsilon chain, sodium ion specific (133 aa).

The protein belongs to the ATPase epsilon chain family. In terms of assembly, F-type ATPases have 2 components, CF(1) - the catalytic core - and CF(0) - the membrane proton channel. CF(1) has five subunits: alpha(3), beta(3), gamma(1), delta(1), epsilon(1). CF(0) has three main subunits: a, b and c.

It localises to the cell membrane. Its activity is regulated as follows. Inhibited by nitrate. Functionally, produces ATP from ADP in the presence of a sodium gradient across the membrane. This chain is ATP synthase epsilon chain, sodium ion specific (atpC), found in Acetobacterium woodii (strain ATCC 29683 / DSM 1030 / JCM 2381 / KCTC 1655 / WB1).